The sequence spans 359 residues: Alpha-2-HS-glycoprotein (359 aa).

The first 18 residues, 1 to 18 (MKSFVLLFCLAQLWGCHS), serve as a signal peptide directing secretion. Residues 27 to 133 (YKEPACDDPD…QFSVLFTKCD (107 aa)) enclose the Cystatin fetuin-A-type 1 domain. 6 disulfide bridges follow: C32/C350, C89/C100, C114/C132, C146/C149, C208/C219, and C230/C248. An N-linked (GlcNAc...) asparagine glycan is attached at N99. Residues S134, S135, and S138 each carry the phosphoserine modification. One can recognise a Cystatin fetuin-A-type 2 domain in the interval 144-256 (KLCPDCPLLA…TCTLFQTQPV (113 aa)). N156 and N176 each carry an N-linked (GlcNAc...) asparagine glycan. The tract at residues 257 to 285 (IPQPQPDGAEAEAPSAVPDAAGPTPSAAG) is disordered. O-linked (GalNAc...) serine glycosylation is present at S271. Residues 276–285 (AAGPTPSAAG) are compositionally biased toward low complexity. O-linked (GalNAc...) threonine glycosylation is present at T280. Residues S282 and S296 are each glycosylated (O-linked (GalNAc...) serine). Residue T314 is modified to Phosphothreonine. Residues S316, S320, S323, and S325 each carry the phosphoserine modification. T334 is a glycosylation site (O-linked (GalNAc...) threonine). S341 is a glycosylation site (O-linked (GalNAc...) serine; partial).

This sequence belongs to the fetuin family. Phosphorylated by FAM20C in the extracellular medium. In terms of tissue distribution, liver and bone.

The protein resides in the secreted. Functionally, promotes endocytosis, possesses opsonic properties and influences the mineral phase of bone. Suggested to have lymphocyte stimulating properties, lipid binding capability and to bind thyroid hormone. The protein is Alpha-2-HS-glycoprotein (AHSG) of Bos taurus (Bovine).